A 669-amino-acid chain; its full sequence is p135Gag-Myb-Ets-transforming protein (669 aa).

Basic and acidic residues predominate over residues 1-10 (NSTMRRKVEQ). Disordered stretches follow at residues 1 to 27 (NSTM…SATT) and 132 to 153 (TQNH…NTMT). The transcriptional activation domain stretch occupies residues 90 to 142 (PAAAAIQRHYNDEDPEKEKRIKELELLLMSTENELKGQQALPTQNHTANYPGW). The region spanning 276-361 (ATFSGFAKEQ…EHLEILQKEE (86 aa)) is the PNT domain. The segment at residues 556-640 (GSGPIQLWQF…AGKRYVYRFV (85 aa)) is a DNA-binding region (ETS).

It localises to the host nucleus. Its function is as follows. DNA-binding protein that specifically recognizes the sequence 5'-YAAC[GT]G-3'. The Myb-Ets protein induces predominantly erythroblastosis in chicken and transforms avian erythroblasts and immature myelomonocytic cells in culture. It appears that the Ets domain is responsible for the effects on erythroid cells and that the Myb domain encodes the myeloid-transforming capacity. This Avian leukemia virus E26 protein is p135Gag-Myb-Ets-transforming protein (GAG).